The following is a 162-amino-acid chain: UPF0114 protein PSPA7_5214 (162 aa).

3 helical membrane passes run 15–35, 53–73, and 136–156; these read LLAPIYMGLSLALLALTIKFF, LILVLLSLIDMALVGGLLVMV, and LMWYVIIHMTFVLSAFAMGYL.

Belongs to the UPF0114 family.

It is found in the cell membrane. This Pseudomonas paraeruginosa (strain DSM 24068 / PA7) (Pseudomonas aeruginosa (strain PA7)) protein is UPF0114 protein PSPA7_5214.